Consider the following 363-residue polypeptide: Probable endopolygalacturonase A (363 aa).

A signal peptide spans M1–A20. Residues A21–R28 constitute a propeptide that is removed on maturation. C31 and C46 are joined by a disulfide. PbH1 repeat units lie at residues S158–S187, S188–S209, G210–S230, V239–T260, V268–Q290, and T302–G347. N-linked (GlcNAc...) asparagine glycosylation is present at N162. D202 serves as the catalytic Proton donor. Residues C204 and C220 are joined by a disulfide bond. H224 is a catalytic residue. 2 disulfide bridges follow: C330–C335 and C354–C363.

Belongs to the glycosyl hydrolase 28 family.

The protein localises to the secreted. The enzyme catalyses (1,4-alpha-D-galacturonosyl)n+m + H2O = (1,4-alpha-D-galacturonosyl)n + (1,4-alpha-D-galacturonosyl)m.. In terms of biological role, involved in maceration and soft-rotting of plant tissue. Hydrolyzes the 1,4-alpha glycosidic bonds of de-esterified pectate in the smooth region of the plant cell wall. This Aspergillus parasiticus protein is Probable endopolygalacturonase A (pgaA).